Consider the following 63-residue polypeptide: Potassium channel toxin MeuTXKalpha4 (63 aa).

The signal sequence occupies residues 1–28 (MSRLLIFILTAVVLSVIIDILNNSKVEG). 3 cysteine pairs are disulfide-bonded: Cys35–Cys53, Cys39–Cys59, and Cys43–Cys61.

Belongs to the short scorpion toxin superfamily. Potassium channel inhibitor family. Expressed by the venom gland.

The protein resides in the secreted. Its function is as follows. May block voltage-gated potassium channels (Kv). The sequence is that of Potassium channel toxin MeuTXKalpha4 from Mesobuthus eupeus (Lesser Asian scorpion).